Reading from the N-terminus, the 515-residue chain is ATP synthase subunit alpha (515 aa).

Gly171 to Thr178 is a binding site for ATP.

Belongs to the ATPase alpha/beta chains family. In terms of assembly, F-type ATPases have 2 components, CF(1) - the catalytic core - and CF(0) - the membrane proton channel. CF(1) has five subunits: alpha(3), beta(3), gamma(1), delta(1), epsilon(1). CF(0) has three main subunits: a(1), b(2) and c(9-12). The alpha and beta chains form an alternating ring which encloses part of the gamma chain. CF(1) is attached to CF(0) by a central stalk formed by the gamma and epsilon chains, while a peripheral stalk is formed by the delta and b chains.

The protein resides in the cell inner membrane. The enzyme catalyses ATP + H2O + 4 H(+)(in) = ADP + phosphate + 5 H(+)(out). In terms of biological role, produces ATP from ADP in the presence of a proton gradient across the membrane. The alpha chain is a regulatory subunit. In Xylella fastidiosa (strain M12), this protein is ATP synthase subunit alpha.